The sequence spans 221 residues: Germin-like protein subfamily 1 member 15 (221 aa).

The first 21 residues, 1–21 (MKVSMSLILITFWALVTIAKA), serve as a signal peptide directing secretion. Cys31 and Cys48 form a disulfide bridge. In terms of domain architecture, Cupin type-1 spans 62–213 (SGLNQAGITN…AFQLDVNVVK (152 aa)). An N-linked (GlcNAc...) asparagine glycan is attached at Asn77. Residues His110, His112, Glu117, and His159 each contribute to the Mn(2+) site.

Belongs to the germin family. As to quaternary structure, oligomer (believed to be a pentamer but probably hexamer).

It localises to the secreted. It is found in the extracellular space. Its subcellular location is the apoplast. Its function is as follows. May play a role in plant defense. Probably has no oxalate oxidase activity even if the active site is conserved. This is Germin-like protein subfamily 1 member 15 from Arabidopsis thaliana (Mouse-ear cress).